The sequence spans 462 residues: MKQQAKSRKPQQPEYIFQVETLSHEGRGIAHYGSHPDHPADKHGKKVFIRYALPGETVKAQITHEAKRLEEAEMVELLAEPSANRVEAVCPHYGICGGCSMQHIHPDEQIHLKQNVLQSHLQHFAGIQPEQWLEPIRSLQSDYRRRARIGVRYLPKQDRLILGFREHHSNRLTSIHTCSVLDKKLSDNLPELRNLLQSLKGKAHIGHVELAKGDHEISLLVRHIEKLNNADVNQLRQFALHKGWQLYLQPKDQSLRRIDEEQGAMRLHYALNAFDVNFAFSPLDFTQVNATVNEQMVQLACELLQLQQGERVLDLFCGLGNFSLPLARCVGAKGQVVGVEASEEMVQRATDNAKRNNLVQASFFSQDLTKDFSHHSWANQGFDALLIDPPRAGAYEIMQYVPNFGAKRIVYVSCNPATLARDAGVLVQHGYQLKKAAVMDMFTHTEHVESIALFEKIQEIND.

One can recognise a TRAM domain in the interval 6–76; that stretch reads KSRKPQQPEY…KRLEEAEMVE (71 aa). Residues cysteine 90, cysteine 96, cysteine 99, and cysteine 178 each coordinate [4Fe-4S] cluster. S-adenosyl-L-methionine is bound by residues glutamine 287, phenylalanine 316, asparagine 321, glutamate 340, aspartate 367, and aspartate 388. Residue cysteine 414 is the Nucleophile of the active site.

This sequence belongs to the class I-like SAM-binding methyltransferase superfamily. RNA M5U methyltransferase family. RlmD subfamily.

The enzyme catalyses uridine(1939) in 23S rRNA + S-adenosyl-L-methionine = 5-methyluridine(1939) in 23S rRNA + S-adenosyl-L-homocysteine + H(+). Its function is as follows. Catalyzes the formation of 5-methyl-uridine at position 1939 (m5U1939) in 23S rRNA. The polypeptide is 23S rRNA (uracil(1939)-C(5))-methyltransferase RlmD (Acinetobacter baumannii (strain AB0057)).